We begin with the raw amino-acid sequence, 399 residues long: S-adenosylmethionine synthase (399 aa).

His-15 is a binding site for ATP. Asp-17 is a Mg(2+) binding site. Glu-43 provides a ligand contact to K(+). L-methionine contacts are provided by Glu-56 and Gln-99. The flexible loop stretch occupies residues 99 to 109 (QSADIAQGVDN). ATP contacts are provided by residues 174 to 176 (DGK), 244 to 245 (RF), Asp-253, 259 to 260 (RK), Ala-276, and Lys-280. L-methionine is bound at residue Asp-253. Lys-284 provides a ligand contact to L-methionine.

This sequence belongs to the AdoMet synthase family. Homotetramer; dimer of dimers. Mg(2+) serves as cofactor. The cofactor is K(+).

It is found in the cytoplasm. The enzyme catalyses L-methionine + ATP + H2O = S-adenosyl-L-methionine + phosphate + diphosphate. The protein operates within amino-acid biosynthesis; S-adenosyl-L-methionine biosynthesis; S-adenosyl-L-methionine from L-methionine: step 1/1. Catalyzes the formation of S-adenosylmethionine (AdoMet) from methionine and ATP. The overall synthetic reaction is composed of two sequential steps, AdoMet formation and the subsequent tripolyphosphate hydrolysis which occurs prior to release of AdoMet from the enzyme. The sequence is that of S-adenosylmethionine synthase from Salinispora arenicola (strain CNS-205).